The chain runs to 874 residues: Alanine--tRNA ligase (874 aa).

Residues H564, H568, C665, and H669 each coordinate Zn(2+).

It belongs to the class-II aminoacyl-tRNA synthetase family. The cofactor is Zn(2+).

It localises to the cytoplasm. The catalysed reaction is tRNA(Ala) + L-alanine + ATP = L-alanyl-tRNA(Ala) + AMP + diphosphate. In terms of biological role, catalyzes the attachment of alanine to tRNA(Ala) in a two-step reaction: alanine is first activated by ATP to form Ala-AMP and then transferred to the acceptor end of tRNA(Ala). Also edits incorrectly charged Ser-tRNA(Ala) and Gly-tRNA(Ala) via its editing domain. This is Alanine--tRNA ligase from Polaromonas naphthalenivorans (strain CJ2).